The chain runs to 516 residues: GMP synthase [glutamine-hydrolyzing] (516 aa).

The region spanning 7–203 is the Glutamine amidotransferase type-1 domain; that stretch reads SVIVLDFGSQ…LIDIAGITPD (197 aa). Cysteine 84 serves as the catalytic Nucleophile. Residues histidine 177 and glutamate 179 contribute to the active site. The GMPS ATP-PPase domain occupies 204–391; the sequence is WSPKSFIQHQ…LGIAEDILMR (188 aa). Residue 231–237 participates in ATP binding; that stretch reads SGGVDST.

In terms of assembly, homodimer.

It catalyses the reaction XMP + L-glutamine + ATP + H2O = GMP + L-glutamate + AMP + diphosphate + 2 H(+). The protein operates within purine metabolism; GMP biosynthesis; GMP from XMP (L-Gln route): step 1/1. Functionally, catalyzes the synthesis of GMP from XMP. This chain is GMP synthase [glutamine-hydrolyzing], found in Chlorobaculum tepidum (strain ATCC 49652 / DSM 12025 / NBRC 103806 / TLS) (Chlorobium tepidum).